We begin with the raw amino-acid sequence, 107 residues long: Glutaredoxin 4 (107 aa).

In terms of domain architecture, Glutaredoxin spans Leu4–His106. Lys21 lines the glutathione pocket. Cys29 contributes to the [2Fe-2S] cluster binding site. Residues Arg58, Phe70, and Cys83–Asp84 each bind glutathione.

This sequence belongs to the glutaredoxin family. Monothiol subfamily. In terms of assembly, homodimer.

Its subcellular location is the cytoplasm. In terms of biological role, monothiol glutaredoxin involved in the biogenesis of iron-sulfur clusters. The chain is Glutaredoxin 4 (grxD) from Haemophilus influenzae (strain ATCC 51907 / DSM 11121 / KW20 / Rd).